Here is a 44-residue protein sequence, read N- to C-terminus: Cytochrome b559 subunit beta (44 aa).

Residues 19 to 35 (WLAIHGIAIPTVFFLGA) form a helical membrane-spanning segment. Residue His-23 coordinates heme.

Belongs to the PsbE/PsbF family. Heterodimer of an alpha subunit and a beta subunit. PSII is composed of 1 copy each of membrane proteins PsbA, PsbB, PsbC, PsbD, PsbE, PsbF, PsbH, PsbI, PsbJ, PsbK, PsbL, PsbM, PsbT, PsbX, PsbY, PsbZ, Psb30/Ycf12, at least 3 peripheral proteins of the oxygen-evolving complex and a large number of cofactors. It forms dimeric complexes. Heme b is required as a cofactor.

Its subcellular location is the plastid. It is found in the chloroplast thylakoid membrane. Its function is as follows. This b-type cytochrome is tightly associated with the reaction center of photosystem II (PSII). PSII is a light-driven water:plastoquinone oxidoreductase that uses light energy to abstract electrons from H(2)O, generating O(2) and a proton gradient subsequently used for ATP formation. It consists of a core antenna complex that captures photons, and an electron transfer chain that converts photonic excitation into a charge separation. This chain is Cytochrome b559 subunit beta, found in Gracilaria tenuistipitata var. liui (Red alga).